Here is a 302-residue protein sequence, read N- to C-terminus: Bifunctional protein FolD (302 aa).

Residues 171–173, S196, and I237 contribute to the NADP(+) site; that span reads GRS.

It belongs to the tetrahydrofolate dehydrogenase/cyclohydrolase family. As to quaternary structure, homodimer.

The catalysed reaction is (6R)-5,10-methylene-5,6,7,8-tetrahydrofolate + NADP(+) = (6R)-5,10-methenyltetrahydrofolate + NADPH. It carries out the reaction (6R)-5,10-methenyltetrahydrofolate + H2O = (6R)-10-formyltetrahydrofolate + H(+). It participates in one-carbon metabolism; tetrahydrofolate interconversion. Its function is as follows. Catalyzes the oxidation of 5,10-methylenetetrahydrofolate to 5,10-methenyltetrahydrofolate and then the hydrolysis of 5,10-methenyltetrahydrofolate to 10-formyltetrahydrofolate. The chain is Bifunctional protein FolD from Sphingopyxis alaskensis (strain DSM 13593 / LMG 18877 / RB2256) (Sphingomonas alaskensis).